The sequence spans 335 residues: Nucleoid-associated protein PP_0973 (335 aa).

The protein belongs to the YejK family.

The protein resides in the cytoplasm. It is found in the nucleoid. This Pseudomonas putida (strain ATCC 47054 / DSM 6125 / CFBP 8728 / NCIMB 11950 / KT2440) protein is Nucleoid-associated protein PP_0973.